The chain runs to 313 residues: Ornithine carbamoyltransferase (313 aa).

Residues 61 to 64, Gln88, Arg112, and 139 to 142 each bind carbamoyl phosphate; these read STRT and HPCQ. L-ornithine-binding positions include Asn170, Asp228, and 232–233; that span reads SM. Carbamoyl phosphate-binding positions include 268-269 and Arg296; that span reads CL.

The protein belongs to the aspartate/ornithine carbamoyltransferase superfamily. OTCase family.

The protein localises to the cytoplasm. It carries out the reaction carbamoyl phosphate + L-ornithine = L-citrulline + phosphate + H(+). Its pathway is amino-acid biosynthesis; L-arginine biosynthesis; L-arginine from L-ornithine and carbamoyl phosphate: step 1/3. Functionally, reversibly catalyzes the transfer of the carbamoyl group from carbamoyl phosphate (CP) to the N(epsilon) atom of ornithine (ORN) to produce L-citrulline. This chain is Ornithine carbamoyltransferase, found in Bordetella parapertussis (strain 12822 / ATCC BAA-587 / NCTC 13253).